We begin with the raw amino-acid sequence, 1049 residues long: Vacuolar membrane protease (1049 aa).

The Cytoplasmic portion of the chain corresponds to 1 to 11; it reads MKCYNPSAFVP. A helical membrane pass occupies residues 12–32; sequence MAVTLVTVIIYLGVFIPLLII. The Vacuolar portion of the chain corresponds to 33 to 438; the sequence is QETVPSAPDD…TVFAVFKLRT (406 aa). N-linked (GlcNAc...) asparagine glycosylation occurs at N50. Residues 114 to 135 form a disordered region; sequence DAEAPESVPSPSNSNDGSAERY. A glycan (N-linked (GlcNAc...) asparagine) is linked at N157. Residues H221 and D233 each coordinate Zn(2+). E267 serves as the catalytic Proton acceptor. Zn(2+) contacts are provided by E268, E293, and H365. Residues 439–459 traverse the membrane as a helical segment; that stretch reads LFAWSLTLLIAAPLMLFAVSY. Residues 460–495 lie on the Cytoplasmic side of the membrane; that stretch reads LLNRQDKFYFFAGSIKAKGPEDEPISLGGWRGAFRY. The chain crosses the membrane as a helical span at residues 496–516; sequence PITLIITCAITFGCASLINKI. Over 517-526 the chain is Vacuolar; it reads NPMIVYSSPY. Residues 527–547 form a helical membrane-spanning segment; sequence SVWSMSASLFFSIFWFIMAGC. Residues 548-557 lie on the Cytoplasmic side of the membrane; sequence NFVRPSALQR. The chain crosses the membrane as a helical span at residues 558–578; that stretch reads GYAFMWLFVFGWIILVAATVY. Over 579-585 the chain is Vacuolar; it reads EDRFKIS. Residues 586 to 606 form a helical membrane-spanning segment; sequence GGYLFVFYEAAIFLATLIAIG. The Cytoplasmic segment spans residues 607-740; that stretch reads EQFALPKKST…LPIWTWLVQY (134 aa). A disordered region spans residues 621 to 686; it reads SQLDHDGNQD…IGGGAPTQRS (66 aa). The segment covering 622-633 has biased composition (basic and acidic residues); the sequence is QLDHDGNQDSHH. The segment covering 655 to 664 has biased composition (acidic residues); sequence GQEEDPEDNV. The chain crosses the membrane as a helical span at residues 741–761; it reads LLVGPFILIVVGQVGLFLVAA. The Vacuolar portion of the chain corresponds to 762–773; it reads LHQTGTDGSPLL. A helical transmembrane segment spans residues 774 to 794; the sequence is LPYLVVAVFSILLLLPVTPFI. The Cytoplasmic portion of the chain corresponds to 795–801; it reads HRLTHHM. A helical transmembrane segment spans residues 802–822; the sequence is PTFFFLVFIGTLIYNLVAFPF. Topologically, residues 823-1049 are vacuolar; that stretch reads SPNNRYKAYF…LVEGSKRFVV (227 aa). An N-linked (GlcNAc...) asparagine glycan is attached at N914.

The protein belongs to the peptidase M28 family. Zn(2+) is required as a cofactor.

The protein resides in the vacuole membrane. May be involved in vacuolar sorting and osmoregulation. The protein is Vacuolar membrane protease of Botryotinia fuckeliana (strain B05.10) (Noble rot fungus).